The chain runs to 394 residues: Elongation factor Tu (394 aa).

The 195-residue stretch at K10–E204 folds into the tr-type G domain. The tract at residues G19–T26 is G1. Position 19 to 26 (G19 to T26) interacts with GTP. Position 26 (T26) interacts with Mg(2+). Residues G60–N64 are G2. A G3 region spans residues D81 to G84. GTP contacts are provided by residues D81–H85 and N136–D139. The tract at residues N136–D139 is G4. The interval S174–L176 is G5.

This sequence belongs to the TRAFAC class translation factor GTPase superfamily. Classic translation factor GTPase family. EF-Tu/EF-1A subfamily. In terms of assembly, monomer.

It localises to the cytoplasm. The catalysed reaction is GTP + H2O = GDP + phosphate + H(+). Functionally, GTP hydrolase that promotes the GTP-dependent binding of aminoacyl-tRNA to the A-site of ribosomes during protein biosynthesis. The sequence is that of Elongation factor Tu from Shewanella halifaxensis (strain HAW-EB4).